We begin with the raw amino-acid sequence, 336 residues long: tRNA N6-adenosine threonylcarbamoyltransferase (336 aa).

Fe cation is bound by residues H114 and H118. Residues 136-140 (LVSGG), D169, G182, D186, and N275 contribute to the substrate site. D301 is a binding site for Fe cation.

It belongs to the KAE1 / TsaD family. Requires Fe(2+) as cofactor.

It localises to the cytoplasm. The catalysed reaction is L-threonylcarbamoyladenylate + adenosine(37) in tRNA = N(6)-L-threonylcarbamoyladenosine(37) in tRNA + AMP + H(+). Its function is as follows. Required for the formation of a threonylcarbamoyl group on adenosine at position 37 (t(6)A37) in tRNAs that read codons beginning with adenine. Is involved in the transfer of the threonylcarbamoyl moiety of threonylcarbamoyl-AMP (TC-AMP) to the N6 group of A37, together with TsaE and TsaB. TsaD likely plays a direct catalytic role in this reaction. The protein is tRNA N6-adenosine threonylcarbamoyltransferase of Streptococcus pneumoniae (strain Taiwan19F-14).